A 309-amino-acid polypeptide reads, in one-letter code: Heme A synthase (309 aa).

The Cytoplasmic segment spans residues 1-6 (MTKKLK). A helical membrane pass occupies residues 7-27 (ILSVISTICMIPLLLGGALVT). The Extracellular segment spans residues 28–62 (KTGSADGCGNSWPLCEGQFLPTKISFEMFIELSHR). Cys-35 and Cys-42 form a disulfide bridge. The active site involves Glu-58. His-61 is a binding site for heme o. A helical membrane pass occupies residues 63 to 83 (GVTGVVGILIVYLTYLVWKEL). Residues 84–88 (RHNKE) are Cytoplasmic-facing. A helical membrane pass occupies residues 89–109 (VVFLAFSALSLMILQALIGAA). Residues 110–123 (AVVWGQSDFALATH) lie on the Extracellular side of the membrane. Position 123 (His-123) interacts with heme o. The helical transmembrane segment at 124–144 (FGISLVCFAAVFLLMLQLFEI) threads the bilayer. At 145–159 (DKKLHTEDIHINKTH) the chain is on the cytoplasmic side. A helical membrane pass occupies residues 160–180 (RIEIYAISFYTMCVVYSGALV). Residues 181–211 (RHTDSNLACRDWPLCVNNSSFGISDYNFYQW) lie on the Extracellular side of the membrane. Cysteines 189 and 195 form a disulfide. A helical membrane pass occupies residues 212-232 (VQMGHRLAAGILFIWTVILTI). Heme b is bound at residue His-216. The Cytoplasmic segment spans residues 233–247 (RMVKHYKNSKVFYWS). A helical transmembrane segment spans residues 248–268 (WLITLGLITLQVLFGALIIFT). Residues 269–271 (SLN) lie on the Extracellular side of the membrane. Residues 272-292 (LAIALFHALFITCYFGMLSFF) traverse the membrane as a helical segment. His-278 provides a ligand contact to heme b. The Cytoplasmic portion of the chain corresponds to 293–309 (MHLSFRAKRREKYSNQS).

This sequence belongs to the COX15/CtaA family. Type 1 subfamily. In terms of assembly, interacts with CtaB. Heme b serves as cofactor.

The protein localises to the cell membrane. It catalyses the reaction Fe(II)-heme o + 2 A + H2O = Fe(II)-heme a + 2 AH2. It functions in the pathway porphyrin-containing compound metabolism; heme A biosynthesis; heme A from heme O: step 1/1. Its function is as follows. Catalyzes the conversion of heme O to heme A by two successive hydroxylations of the methyl group at C8. The first hydroxylation forms heme I, the second hydroxylation results in an unstable dihydroxymethyl group, which spontaneously dehydrates, resulting in the formyl group of heme A. This Oceanobacillus iheyensis (strain DSM 14371 / CIP 107618 / JCM 11309 / KCTC 3954 / HTE831) protein is Heme A synthase.